Reading from the N-terminus, the 116-residue chain is Nucleoid-associated protein P9515_00191 (116 aa).

A compositionally biased stretch (basic and acidic residues) spans 89-98; it reads STTTMKERMN. The segment at 89–116 is disordered; sequence STTTMKERMNDLTGGLNLNLPGLDNNDS. Residues 99–116 show a composition bias toward low complexity; sequence DLTGGLNLNLPGLDNNDS.

It belongs to the YbaB/EbfC family. Homodimer.

The protein resides in the cytoplasm. It localises to the nucleoid. Its function is as follows. Binds to DNA and alters its conformation. May be involved in regulation of gene expression, nucleoid organization and DNA protection. In Prochlorococcus marinus (strain MIT 9515), this protein is Nucleoid-associated protein P9515_00191.